The chain runs to 65 residues: Large ribosomal subunit protein bL35 (65 aa).

It belongs to the bacterial ribosomal protein bL35 family.

This is Large ribosomal subunit protein bL35 from Clostridium kluyveri (strain NBRC 12016).